The primary structure comprises 269 residues: Shikimate dehydrogenase (NADP(+)) (269 aa).

Shikimate contacts are provided by residues 14–16 and threonine 60; that span reads TLS. Catalysis depends on lysine 64, which acts as the Proton acceptor. Position 76 (aspartate 76) interacts with NADP(+). 2 residues coordinate shikimate: asparagine 85 and aspartate 100. NADP(+) contacts are provided by residues 122 to 126 and methionine 208; that span reads GAGGA. Tyrosine 210 is a shikimate binding site. Residue glycine 232 participates in NADP(+) binding.

It belongs to the shikimate dehydrogenase family. Homodimer.

It catalyses the reaction shikimate + NADP(+) = 3-dehydroshikimate + NADPH + H(+). Its pathway is metabolic intermediate biosynthesis; chorismate biosynthesis; chorismate from D-erythrose 4-phosphate and phosphoenolpyruvate: step 4/7. Functionally, involved in the biosynthesis of the chorismate, which leads to the biosynthesis of aromatic amino acids. Catalyzes the reversible NADPH linked reduction of 3-dehydroshikimate (DHSA) to yield shikimate (SA). This chain is Shikimate dehydrogenase (NADP(+)), found in Caldivirga maquilingensis (strain ATCC 700844 / DSM 13496 / JCM 10307 / IC-167).